We begin with the raw amino-acid sequence, 178 residues long: Large ribosomal subunit protein uL6 (178 aa).

Belongs to the universal ribosomal protein uL6 family. As to quaternary structure, part of the 50S ribosomal subunit.

Its function is as follows. This protein binds to the 23S rRNA, and is important in its secondary structure. It is located near the subunit interface in the base of the L7/L12 stalk, and near the tRNA binding site of the peptidyltransferase center. This Gluconobacter oxydans (strain 621H) (Gluconobacter suboxydans) protein is Large ribosomal subunit protein uL6.